The primary structure comprises 274 residues: Rhamnulose-1-phosphate aldolase (274 aa).

Glutamate 117 is an active-site residue. Positions 141, 143, and 212 each coordinate Zn(2+).

It belongs to the aldolase class II family. RhaD subfamily. Homotetramer. Zn(2+) is required as a cofactor.

The protein resides in the cytoplasm. The catalysed reaction is L-rhamnulose 1-phosphate = (S)-lactaldehyde + dihydroxyacetone phosphate. It participates in carbohydrate degradation; L-rhamnose degradation; glycerone phosphate from L-rhamnose: step 3/3. Functionally, catalyzes the reversible cleavage of L-rhamnulose-1-phosphate to dihydroxyacetone phosphate (DHAP) and L-lactaldehyde. This Escherichia coli (strain SE11) protein is Rhamnulose-1-phosphate aldolase.